The primary structure comprises 144 residues: Androgenic gland hormone (144 aa).

Positions 1–21 are cleaved as a signal peptide; it reads MKGLVILVSLMCLALYNRICA. 4 cysteine pairs are disulfide-bonded: C33–C123, C42–C59, C44–C141, and C124–C132. A propeptide spans 68–113 (c peptide); it reads SAPEDELAFEDYEDQDYFHPRALSIPSEIEHDNEKESDAFSILSRG. N-linked (GlcNAc...) (complex) asparagine glycosylation is present at N133.

Androgenic gland.

The protein localises to the secreted. Controls sex differentiation and the formation of male appendages, spermatogenesis, pigmentation, and male specific behavior. The polypeptide is Androgenic gland hormone (Armadillidium vulgare (Pillbug)).